A 735-amino-acid polypeptide reads, in one-letter code: Ion-translocating oxidoreductase complex subunit C (735 aa).

4Fe-4S ferredoxin-type domains follow at residues 368–397 and 407–436; these read MGAP…QQLY and KATA…VQYF. The [4Fe-4S] cluster site is built by Cys377, Cys380, Cys383, Cys387, Cys416, Cys419, Cys422, and Cys426. Residues 534 to 716 form a disordered region; that stretch reads QARAKQAAHP…ADPRKAAVAA (183 aa).

This sequence belongs to the 4Fe4S bacterial-type ferredoxin family. RnfC subfamily. The complex is composed of six subunits: RsxA, RsxB, RsxC, RsxD, RsxE and RsxG. [4Fe-4S] cluster serves as cofactor.

The protein localises to the cell inner membrane. Functionally, part of a membrane-bound complex that couples electron transfer with translocation of ions across the membrane. Required to maintain the reduced state of SoxR. In Salmonella agona (strain SL483), this protein is Ion-translocating oxidoreductase complex subunit C.